A 65-amino-acid chain; its full sequence is MRTTVTVDDALLAKAAELTGVKEKSTLLREGLQTLVRVESARRLAALGGTDPQATAAPRRRTSPR.

The interval 46–65 is disordered; it reads ALGGTDPQATAAPRRRTSPR.

Functionally, antitoxin component of a type II toxin-antitoxin (TA) system. This chain is Antitoxin VapB32 (vapB32), found in Mycobacterium tuberculosis (strain CDC 1551 / Oshkosh).